A 492-amino-acid chain; its full sequence is Argininosuccinate lyase (492 aa).

It belongs to the lyase 1 family. Argininosuccinate lyase subfamily.

Its subcellular location is the cytoplasm. The enzyme catalyses 2-(N(omega)-L-arginino)succinate = fumarate + L-arginine. The protein operates within amino-acid biosynthesis; L-arginine biosynthesis; L-arginine from L-ornithine and carbamoyl phosphate: step 3/3. This Methanocorpusculum labreanum (strain ATCC 43576 / DSM 4855 / Z) protein is Argininosuccinate lyase.